A 359-amino-acid chain; its full sequence is Putative nucleotidyltransferase MAB21L1 (359 aa).

A ribonucleoside 5'-triphosphate contacts are provided by residues 23-24 and 63-66; these read RK and FEGL. The Mg(2+) site is built by glutamate 73 and glutamate 75. A ribonucleoside 5'-triphosphate-binding positions include lysine 248 and 252 to 255; that span reads SLLK.

The protein belongs to the mab-21 family. In terms of assembly, monomer. Homodecamer; composed of 2 back to back homopentamers. The protein may exist as monomer in solution and oiligomerizes upon ligand binding.

It localises to the nucleus. Putative nucleotidyltransferase required for several aspects of embryonic development including normal development of the eye. It is unclear whether it displays nucleotidyltransferase activity in vivo. Binds single-stranded RNA (ssRNA). In Danio rerio (Zebrafish), this protein is Putative nucleotidyltransferase MAB21L1 (mab21l1).